We begin with the raw amino-acid sequence, 276 residues long: Anamorsin homolog (276 aa).

The segment at 1 to 152 (MEPYVVDNLN…TRGSSIKLPW (152 aa)) is N-terminal SAM-like domain. Positions 152–189 (WAHSDIEAAWENVDNETSYDVDKNLINTNSLLQKSDYV) are linker. Cysteine 195, cysteine 211, cysteine 214, and cysteine 216 together coordinate [2Fe-2S] cluster. Residues 195–216 (CGQEFAKNSIGKRKRACKNCTC) are fe-S binding site A. Cysteine 237, cysteine 240, cysteine 248, and cysteine 251 together coordinate [4Fe-4S] cluster. 2 consecutive short sequence motifs (cx2C motif) follow at residues 237–240 (CGNC) and 248–251 (CSTC). The tract at residues 237–251 (CGNCYLGDAFRCSTC) is fe-S binding site B.

Belongs to the anamorsin family. In terms of assembly, monomer. [2Fe-2S] cluster is required as a cofactor. [4Fe-4S] cluster serves as cofactor.

Its subcellular location is the cytoplasm. The protein localises to the mitochondrion intermembrane space. Its function is as follows. Component of the cytosolic iron-sulfur (Fe-S) protein assembly (CIA) machinery. Required for the maturation of extramitochondrial Fe-S proteins. Part of an electron transfer chain functioning in an early step of cytosolic Fe-S biogenesis, facilitating the de novo assembly of a [4Fe-4S] cluster on the cytosolic Fe-S scaffold complex. Electrons are transferred from NADPH via a FAD- and FMN-containing diflavin oxidoreductase. Together with the diflavin oxidoreductase, also required for the assembly of the diferric tyrosyl radical cofactor of ribonucleotide reductase (RNR), probably by providing electrons for reduction during radical cofactor maturation in the catalytic small subunit. In Schistosoma japonicum (Blood fluke), this protein is Anamorsin homolog.